The sequence spans 269 residues: Hydroxyethylthiazole kinase (269 aa).

Met-41 contributes to the substrate binding site. ATP contacts are provided by Arg-117 and Ser-165. Gly-192 contacts substrate.

The protein belongs to the Thz kinase family. Mg(2+) is required as a cofactor.

It carries out the reaction 5-(2-hydroxyethyl)-4-methylthiazole + ATP = 4-methyl-5-(2-phosphooxyethyl)-thiazole + ADP + H(+). Its pathway is cofactor biosynthesis; thiamine diphosphate biosynthesis; 4-methyl-5-(2-phosphoethyl)-thiazole from 5-(2-hydroxyethyl)-4-methylthiazole: step 1/1. Its function is as follows. Catalyzes the phosphorylation of the hydroxyl group of 4-methyl-5-beta-hydroxyethylthiazole (THZ). The sequence is that of Hydroxyethylthiazole kinase from Actinobacillus succinogenes (strain ATCC 55618 / DSM 22257 / CCUG 43843 / 130Z).